A 543-amino-acid chain; its full sequence is MASQGGPRRSLSVTTASLHGKKKSMDMAERGLDTGRRSLTVSRSPLGLTGGERTVKRLRLSKALTVPATTTIYEACKRMASRRVDALLLTDSNEMLCGILTDKDIATRVISQELNVEETPVSKVMTKNPMFVLSETLAVEALQKMVQGKFRHLPVVENGEVIALLDIAKCLYDAIARMERAAEKGKAIAAAVEGVEKSWGTNTSVPNTFIETLRDRMFRPSLSTIIPDDTKVLKVSPTDTVLTVAKKMVEFQSSCAVVIIEDKLRGIFTSKDILMRVVAENLPPSETLVETVMTQNPESTIVDTPIVEALHIMHEGKFLHLPVTDKEGDVVAVVDVIHVTHAAVATAGTTAGIGNEATNTMMQKFWDSAMALSPNEDDEDSRSESSMKVASEAETGKSFPFANTFSFKIEDKKHRKHRFISDTRSLTEVITAIIQRVGDDIDPDNFPQILYEDEDHDKVLLASDSDLQAAIEHAKSIGWKSLRLHLDDSREGKGRRRRRASGSAESMEYVETDAWAAAYSGVAAGAALVAGLGFMAFLRKFGH.

The segment at 1 to 35 is disordered; that stretch reads MASQGGPRRSLSVTTASLHGKKKSMDMAERGLDTG. Phosphoserine is present on Ser17. The segment covering 23–35 has biased composition (basic and acidic residues); sequence KSMDMAERGLDTG. 4 CBS domains span residues 59-118, 125-183, 225-285, and 293-350; these read RLSK…NVEE, MTKN…RAAE, IIPD…LPPS, and MTQN…AGTT. A disordered region spans residues 372 to 393; that stretch reads LSPNEDDEDSRSESSMKVASEA. Positions 402 to 489 constitute a PB1 domain; that stretch reads ANTFSFKIED…KSLRLHLDDS (88 aa). A helical transmembrane segment spans residues 518-538; that stretch reads AYSGVAAGAALVAGLGFMAFL.

The protein localises to the membrane. In Arabidopsis thaliana (Mouse-ear cress), this protein is CBS domain-containing protein CBSCBSPB1 (CBSCBSPB1).